The primary structure comprises 189 residues: MSIKSDKWIRRMAEEHKMIEPFVPDQVRAAEDGRRIVSYGTSSYGYDIRCADEFKIFTNINSTIVDPKNFDEGSFVDFKGDVCIIPPNSFALARTVEYFRIPRTVLTVCLGKSTYARCGIIVNVTPFEPEWEGYVTLEFSNTTPLPAKIYANEGVAQVLFFESDEVCDVSYADRGGKYQGQRGVTLPKT.

Residues 112-117 (KSTYAR), 136-138 (TLE), Gln-157, Tyr-171, and Gln-181 contribute to the dCTP site. The active-site Proton donor/acceptor is Glu-138.

The protein belongs to the dCTP deaminase family. In terms of assembly, homotrimer.

The enzyme catalyses dCTP + H2O + H(+) = dUTP + NH4(+). The protein operates within pyrimidine metabolism; dUMP biosynthesis; dUMP from dCTP (dUTP route): step 1/2. Catalyzes the deamination of dCTP to dUTP. The sequence is that of dCTP deaminase from Burkholderia thailandensis (strain ATCC 700388 / DSM 13276 / CCUG 48851 / CIP 106301 / E264).